We begin with the raw amino-acid sequence, 198 residues long: Small ribosomal subunit protein eS1 (198 aa).

The protein belongs to the eukaryotic ribosomal protein eS1 family.

The chain is Small ribosomal subunit protein eS1 from Methanosphaerula palustris (strain ATCC BAA-1556 / DSM 19958 / E1-9c).